Consider the following 78-residue polypeptide: MSEVVVKEQLEQYISKIERLEQEKADLLEEIKNIFQDASSHGFDVKAMKSILKLKKLDKDKLAEQDAMLELYRDTLGI.

Belongs to the UPF0335 family.

In Rickettsia canadensis (strain McKiel), this protein is UPF0335 protein A1E_00570.